We begin with the raw amino-acid sequence, 211 residues long: tRNA (guanine-N(7)-)-methyltransferase (211 aa).

Glu-44, Asp-69, Asp-96, and Asp-118 together coordinate S-adenosyl-L-methionine. Asp-118 is an active-site residue. Lys-122 is a substrate binding site. The interval 124-129 (KHEKRR) is interaction with RNA. Residues Asp-154 and 191–194 (TEYE) each bind substrate.

Belongs to the class I-like SAM-binding methyltransferase superfamily. TrmB family.

The catalysed reaction is guanosine(46) in tRNA + S-adenosyl-L-methionine = N(7)-methylguanosine(46) in tRNA + S-adenosyl-L-homocysteine. It functions in the pathway tRNA modification; N(7)-methylguanine-tRNA biosynthesis. Catalyzes the formation of N(7)-methylguanine at position 46 (m7G46) in tRNA. The sequence is that of tRNA (guanine-N(7)-)-methyltransferase from Streptococcus agalactiae serotype Ia (strain ATCC 27591 / A909 / CDC SS700).